A 522-amino-acid polypeptide reads, in one-letter code: Peptide methionine sulfoxide reductase MsrA/MsrB (522 aa).

In terms of domain architecture, Thioredoxin spans 17–174 (LALGACSPKI…ALALIRDPNA (158 aa)). C68 and C71 are joined by a disulfide. Residues 199-354 (RTIYLAGGCF…PNGYCHIDIR (156 aa)) form a peptide methionine sulfoxide reductase A region. The active site involves C207. The 124-residue stretch at 383 to 506 (DAELKRTLTE…NGASLKFIPL (124 aa)) folds into the MsrB domain. Residues C440 and C495 are joined by a disulfide bond. C495 acts as the Nucleophile in catalysis.

This sequence in the N-terminal section; belongs to the thioredoxin family. In the central section; belongs to the MsrA Met sulfoxide reductase family. It in the C-terminal section; belongs to the MsrB Met sulfoxide reductase family.

It catalyses the reaction L-methionyl-[protein] + [thioredoxin]-disulfide + H2O = L-methionyl-(S)-S-oxide-[protein] + [thioredoxin]-dithiol. The catalysed reaction is [thioredoxin]-disulfide + L-methionine + H2O = L-methionine (S)-S-oxide + [thioredoxin]-dithiol. It carries out the reaction L-methionyl-[protein] + [thioredoxin]-disulfide + H2O = L-methionyl-(R)-S-oxide-[protein] + [thioredoxin]-dithiol. Functionally, has an important function as a repair enzyme for proteins that have been inactivated by oxidation. Catalyzes the reversible oxidation-reduction of methionine sulfoxide in proteins to methionine. This chain is Peptide methionine sulfoxide reductase MsrA/MsrB (msrAB), found in Neisseria meningitidis serogroup B (strain ATCC BAA-335 / MC58).